The primary structure comprises 89 residues: Neurotoxin beta-KTx 52.1 (89 aa).

Residues 1–20 (MKQYIFFLALIVLTATFAEA) form the signal peptide. Residues 21–39 (GKKTEILDKVKKVFSKAKD) constitute a propeptide that is removed on maturation. A BetaSPN-type CS-alpha/beta domain is found at 53 to 89 (ELGCPFIDKWCEDHCDSKKLVGKCENFDCSCVKLGGK). Cystine bridges form between cysteine 56–cysteine 76, cysteine 63–cysteine 81, and cysteine 67–cysteine 83.

It belongs to the long chain scorpion toxin family. Class 2 subfamily. Expressed by the venom gland.

It is found in the secreted. In terms of biological role, inhibits voltage-gated potassium channel. This Lychas mucronatus (Chinese swimming scorpion) protein is Neurotoxin beta-KTx 52.1.